Here is a 591-residue protein sequence, read N- to C-terminus: Indole-3-acetic acid-amido synthetase GH3.10 (591 aa).

It belongs to the IAA-amido conjugating enzyme family. In terms of tissue distribution, expressed in cotyledons and hypocotyls.

In terms of biological role, catalyzes the synthesis of indole-3-acetic acid (IAA)-amino acid conjugates, providing a mechanism for the plant to cope with the presence of excess auxin. Involved in red light-specific hypocotyl elongation. May act downstream of a red light signal transduction and determine the degree of hypocotyl elongation. The sequence is that of Indole-3-acetic acid-amido synthetase GH3.10 from Arabidopsis thaliana (Mouse-ear cress).